We begin with the raw amino-acid sequence, 317 residues long: Cyclin-T1-3 (317 aa).

The protein belongs to the cyclin family. Cyclin T subfamily. In terms of assembly, interacts with CDKC-1 and CDKC-2. As to expression, abundantly expressed in flowers. Expressed in roots, seedlings, rosettes and stems.

The protein is Cyclin-T1-3 (CYCT1-3) of Arabidopsis thaliana (Mouse-ear cress).